The primary structure comprises 97 residues: Putative membrane protein insertion efficiency factor (97 aa).

Positions 72 to 97 (VPGAEPDQEQHQCTPLCNHHSEDHSQ) are disordered.

The protein belongs to the UPF0161 family.

It localises to the cell inner membrane. Its function is as follows. Could be involved in insertion of integral membrane proteins into the membrane. In Alcanivorax borkumensis (strain ATCC 700651 / DSM 11573 / NCIMB 13689 / SK2), this protein is Putative membrane protein insertion efficiency factor.